A 25-amino-acid chain; its full sequence is Bombinin-like peptide 4 (25 aa).

At phenylalanine 25 the chain carries Phenylalanine amide.

The protein belongs to the bombinin family. Expressed by the skin glands.

Its subcellular location is the secreted. Has antimicrobial activity, but no hemolytic activity. Preference on killing Gram-negative non-enteric bacteria. This chain is Bombinin-like peptide 4, found in Bombina orientalis (Oriental fire-bellied toad).